Consider the following 294-residue polypeptide: Putative glucose-6-phosphate 1-epimerase (294 aa).

Residues Arg74 and Arg99 each coordinate substrate. Residue His164 is part of the active site. Asp208 lines the substrate pocket. The active site involves Glu267.

This sequence belongs to the glucose-6-phosphate 1-epimerase family. Monomer in solution.

It carries out the reaction alpha-D-glucose 6-phosphate = beta-D-glucose 6-phosphate. The sequence is that of Putative glucose-6-phosphate 1-epimerase (yeaD) from Escherichia coli (strain K12).